Here is a 166-residue protein sequence, read N- to C-terminus: Cytochrome P450 regulator dap1 (166 aa).

The chain crosses the membrane as a helical span at residues 4 to 21 (TQVVFIVTLFLYLLITRW). The Cytochrome b5 heme-binding domain maps to 42–145 (DYTPAELKEY…QKYQAVGRLI (104 aa)). Ser108 carries the post-translational modification Phosphoserine. Heme is bound at residue Tyr138.

It belongs to the cytochrome b5 family. MAPR subfamily. As to quaternary structure, interacts with erg5 and erg11.

The protein localises to the endoplasmic reticulum. Its subcellular location is the membrane. Functionally, required for sterol biosynthesis. Functions as a positive regulator of cytochrome P450 enzymes erg5 and erg11. Function requires bound heme. This Schizosaccharomyces pombe (strain 972 / ATCC 24843) (Fission yeast) protein is Cytochrome P450 regulator dap1 (dap1).